A 151-amino-acid chain; its full sequence is uncharacterized protein (151 aa).

The interval 1-48 is disordered; sequence MRMAPTESTEGRRLWPGPREGGSGKETTSEKLSNLPRPHSYSPKRADA.

This is an uncharacterized protein from Homo sapiens (Human).